Here is a 115-residue protein sequence, read N- to C-terminus: DNA-binding protein STK_13740 (115 aa).

It belongs to the PDCD5 family.

In Sulfurisphaera tokodaii (strain DSM 16993 / JCM 10545 / NBRC 100140 / 7) (Sulfolobus tokodaii), this protein is DNA-binding protein STK_13740.